We begin with the raw amino-acid sequence, 674 residues long: Ribosome biogenesis protein BOP1 homolog (674 aa).

Residues 1-28 (MASTSAATPLKNKRKFENGKKKPKTLKD) are disordered. Residues 15–28 (KFENGKKKPKTLKD) show a composition bias toward basic and acidic residues. WD repeat units lie at residues 342 to 384 (GHTG…KTFQ), 386 to 425 (DGEVTSVSFSPVADRTLLAVAYEGKYVAILNTGCGDRLHV), 427 to 458 (QTEALLAETPTDAQEDGAVVTWRKSKEKLMLK), 459 to 500 (MPNE…SQCP), 503 to 541 (KRKGHVQAVTFHPTQARLFVATKIHVREYDLARCVLVKK), 587 to 626 (HHTAAVRSVAYHKKYPLLATVSDDGTAMVYYARIYTDFVK), and 643 to 674 (PNDLCMLHTTWHPTQPWLITAGADGTIALFTY).

Belongs to the WD repeat BOP1/ERB1 family.

It localises to the nucleus. The protein resides in the nucleolus. It is found in the nucleoplasm. Functionally, required for maturation of ribosomal RNAs and formation of the large ribosomal subunit. This chain is Ribosome biogenesis protein BOP1 homolog, found in Caenorhabditis elegans.